The primary structure comprises 405 residues: Tryptophan synthase beta chain (405 aa).

Lys95 carries the post-translational modification N6-(pyridoxal phosphate)lysine.

It belongs to the TrpB family. In terms of assembly, tetramer of two alpha and two beta chains. Requires pyridoxal 5'-phosphate as cofactor.

The catalysed reaction is (1S,2R)-1-C-(indol-3-yl)glycerol 3-phosphate + L-serine = D-glyceraldehyde 3-phosphate + L-tryptophan + H2O. It functions in the pathway amino-acid biosynthesis; L-tryptophan biosynthesis; L-tryptophan from chorismate: step 5/5. Its function is as follows. The beta subunit is responsible for the synthesis of L-tryptophan from indole and L-serine. The protein is Tryptophan synthase beta chain of Pseudomonas putida (strain GB-1).